The following is a 196-amino-acid chain: Small ribosomal subunit protein uS4C (196 aa).

The region spanning 87 to 149 (CRLDNVVYRI…HRQNEMFSNN (63 aa)) is the S4 RNA-binding domain.

The protein belongs to the universal ribosomal protein uS4 family. Part of the 30S ribosomal subunit. Contacts protein S5. The interaction surface between S4 and S5 is involved in control of translational fidelity.

In terms of biological role, one of the primary rRNA binding proteins, it binds directly to 16S rRNA where it nucleates assembly of the body of the 30S subunit. With S5 and S12 plays an important role in translational accuracy. The protein is Small ribosomal subunit protein uS4C (rpsD3) of Clostridium acetobutylicum (strain ATCC 824 / DSM 792 / JCM 1419 / IAM 19013 / LMG 5710 / NBRC 13948 / NRRL B-527 / VKM B-1787 / 2291 / W).